A 315-amino-acid chain; its full sequence is MDLRQFLLCLSLCTAFALSKPTEKKDRVHHEPQLSDKVHNDAQNFDYDHDAFLGAEEAKSFDQLTPEESKERLGKIVSKIDDDKDGFVTVDELKGWIKFAQKRWIHEDVERQWKGHDLNEDGLVSWEEYKNATYGYVLDDPDPDDGFNYKQMMVRDERRFKMADKDGDLIATKEEFTAFPHPDEYDYMKDIVVQETMEDIDKNADGFIDLEEYIGDMYSHDGNADEPEWVKTEREQFVEFRDKNRDGRMDKEETKDWILPSDYDHAEAEARHLVYESDQNKDGKLTKEEIVDKYDLFVGSQATDFGEALVRHDEF.

An N-terminal signal peptide occupies residues 1–19 (MDLRQFLLCLSLCTAFALS). Position 47 is a phosphotyrosine (Y47). T65 carries the post-translational modification Phosphothreonine. EF-hand domains lie at 68 to 103 (ESKE…AQKR), 104 to 139 (WIHE…YVLD), 151 to 186 (QMMV…DEYD), 188 to 223 (MKDI…HDGN), 229 to 264 (WVKT…SDYD), and 265 to 300 (HAEA…FVGS). S69 is subject to Phosphoserine. D81, D83, D85, E92, D117, N119, D121, and E128 together coordinate Ca(2+). An N-linked (GlcNAc...) asparagine glycan is attached at N131. Residue D164 coordinates Ca(2+). At K165 the chain carries N6-acetyllysine. Ca(2+) is bound by residues D166, D168, E175, D201, N203, D205, E212, D242, N244, D246, R248, and E253. The residue at position 254 (T254) is a Phosphothreonine. S261 and S277 each carry phosphoserine. D278, N280, D282, K284, and E289 together coordinate Ca(2+). Residues 312 to 315 (HDEF) carry the Prevents secretion from ER motif.

Belongs to the CREC family. As to quaternary structure, interacts with GGCX.

The protein resides in the endoplasmic reticulum membrane. It localises to the golgi apparatus. The protein localises to the secreted. Its subcellular location is the melanosome. It is found in the sarcoplasmic reticulum lumen. Its function is as follows. Involved in regulation of vitamin K-dependent carboxylation of multiple N-terminal glutamate residues. Seems to inhibit gamma-carboxylase GGCX. Binds 7 calcium ions with a low affinity. The protein is Calumenin (CALU) of Mesocricetus auratus (Golden hamster).